The chain runs to 458 residues: MEFDTIAAISTALGEGAIAIVRVSGDDAIEKVDRIFKGKDLTQVSSHTIHYGHIVDLDTNQVIEEVMVSIMRAPRTFTRENIVEINCHGGLVSVNKVLQLILAQGVRLAEPGEFTKRAFLNGRIDLSQAEAVMDLIRAKTDRAMNVAINQMEGRLSKLIGHLRQEILETLAHIEVNIDYPEYDDVEEMTHNILIEKATHVRAEIAKILETSKQGKILREGISTAIIGRPNVGKSSLLNSLVQEKKAIVTDIAGTTRDVIEEYVNVRGVPLKLIDTAGIRETEDIVERIGVERSKEMMSQADLVLIVVNYSEALTNEDEDLFRAVQGKDFIVIVNKTDLPQEIDMERVTDLAVGNRVITTSLIEEQGIDELEKAIADLFFEGTIDSADMTYVSNARHIGLLTQAGRTINDAIEAIENGVPIDMVQIDLTRAWEILGEITGDTVHESLIDQLFSQFCLGK.

Positions 22, 84, and 123 each coordinate (6S)-5-formyl-5,6,7,8-tetrahydrofolate. Residues 220–379 (GISTAIIGRP…LEKAIADLFF (160 aa)) enclose the TrmE-type G domain. Asn-230 provides a ligand contact to K(+). Residues 230-235 (NVGKSS), 249-255 (TDIAGTT), and 274-277 (DTAG) each bind GTP. Ser-234 is a Mg(2+) binding site. Thr-249, Ile-251, and Thr-254 together coordinate K(+). Position 255 (Thr-255) interacts with Mg(2+). (6S)-5-formyl-5,6,7,8-tetrahydrofolate is bound at residue Lys-458.

Belongs to the TRAFAC class TrmE-Era-EngA-EngB-Septin-like GTPase superfamily. TrmE GTPase family. In terms of assembly, homodimer. Heterotetramer of two MnmE and two MnmG subunits. It depends on K(+) as a cofactor.

The protein resides in the cytoplasm. Its function is as follows. Exhibits a very high intrinsic GTPase hydrolysis rate. Involved in the addition of a carboxymethylaminomethyl (cmnm) group at the wobble position (U34) of certain tRNAs, forming tRNA-cmnm(5)s(2)U34. This chain is tRNA modification GTPase MnmE, found in Bacillus mycoides (strain KBAB4) (Bacillus weihenstephanensis).